Reading from the N-terminus, the 86-residue chain is Mu-theraphotoxin-Hhn1b 3 (86 aa).

Positions 1-21 (MKASMFLALTGLALLFVVCYA) are cleaved as a signal peptide. The propeptide occupies 22–49 (SESEEKEFSNELLSSVLAVDDNSKGEER). Cystine bridges form between C51–C66, C58–C73, and C65–C80. I84 carries the isoleucine amide modification.

It belongs to the neurotoxin 10 (Hwtx-1) family. 22 (Htx-4) subfamily. In terms of assembly, monomer. As to expression, expressed by the venom gland.

The protein resides in the secreted. In terms of biological role, neurotoxin. Selectively blocks neuronal tetrodotoxin-sensitive voltage-gated sodium channels (Nav) with an IC(50) of 44.6 nM. Does not affect tetrodotoxin-resistant voltage-gated sodium channels or calcium channels. The chain is Mu-theraphotoxin-Hhn1b 3 from Cyriopagopus hainanus (Chinese bird spider).